The sequence spans 129 residues: UPF0148 protein APE_0207 (129 aa).

This sequence belongs to the UPF0148 family.

This is UPF0148 protein APE_0207 from Aeropyrum pernix (strain ATCC 700893 / DSM 11879 / JCM 9820 / NBRC 100138 / K1).